Consider the following 212-residue polypeptide: Endoplasmic reticulum vesicle protein 25 (212 aa).

The signal sequence occupies residues 1-21 (MKSFAACVLLLCALFFEQVFA). The Lumenal segment spans residues 22–181 (VRFDIPASTK…TNESTNRRVR (160 aa)). Residues 34–122 (QVCIRDFVSE…SRSIELDIES (89 aa)) enclose the GOLD domain. The chain crosses the membrane as a helical span at residues 182 to 202 (NFSIAVIVVLVALGAWQVNYM). Topologically, residues 203–212 (KNFFRAKHII) are cytoplasmic.

The protein belongs to the EMP24/GP25L family.

It localises to the endoplasmic reticulum membrane. The protein resides in the golgi apparatus membrane. Constituent of COPII-coated endoplasmic reticulum-derived transport vesicles. Required for efficient transport of a subset of secretory proteins to the Golgi. Facilitates retrograde transport from the Golgi to the endoplasmic reticulum. The chain is Endoplasmic reticulum vesicle protein 25 (ERV25) from Kluyveromyces lactis (strain ATCC 8585 / CBS 2359 / DSM 70799 / NBRC 1267 / NRRL Y-1140 / WM37) (Yeast).